A 77-amino-acid chain; its full sequence is Apelin (77 aa).

The first 22 residues, 1–22 (MNLRLCVQALLLLWLSLTAVCG), serve as a signal peptide directing secretion. A propeptide spanning residues 23–41 (VPLMLPPDGTGLEEGSMRY) is cleaved from the precursor. Positions 46-77 (RTSRTGPGAWQGGRRKFRRQRPRLSHKGPMPF) are disordered. A compositionally biased stretch (basic residues) spans 58–71 (GRRKFRRQRPRLSH).

This sequence belongs to the apelin family. Several active peptides may be produced by proteolytic processing of the peptide precursor. In terms of tissue distribution, expressed in extraembryonic visceral endoderm and in the primitive streak at 6.5 and 7.5 dpc. Expressed in the anterior visceral yolk sac at 8.25 dpc. Expressed weakly in the embryonic heart at 11.5 dpc. Expressed in the adult heart. Expressed in endothelial cells and cardiomyocytes and weakly expressed in fibroblasts.

It is found in the secreted. The protein resides in the extracellular space. Its function is as follows. Peptide hormone that functions as endogenous ligand for the G-protein-coupled apelin receptor (APLNR/APJ). Functions as a balanced agonist activating both G(i) protein pathway and beta-arrestin pathway of APLNR. Downstream G proteins activation, apelin can inhibit cAMP production and activate key intracellular effectors such as ERKs. On the other hand, APLNR activation induces beta-arrestin recruitment to the membrane leading to desensitization and internalization of the receptor. Apelin also blunts mechanical stretch-induced hypertrophic induction from APLNR. Apelin-36 dissociates more hardly than (pyroglu)apelin-13 from APLNR. Involved in the regulation of cardiac precursor cell movements during gastrulation and heart morphogenesis. Has an inhibitory effect on cytokine production in response to T-cell receptor/CD3 cross-linking; the oral intake of apelin in the colostrum and the milk might therefore modulate immune responses in neonates. Plays a role in early coronary blood vessels formation. Mediates myocardial contractility in an ERK1/2-dependent manner. May also have a role in the central control of body fluid homeostasis by influencing vasopressin release and drinking behavior. This is Apelin from Mus musculus (Mouse).